A 460-amino-acid polypeptide reads, in one-letter code: V-type ATP synthase beta chain (460 aa).

Belongs to the ATPase alpha/beta chains family.

Its function is as follows. Produces ATP from ADP in the presence of a proton gradient across the membrane. The V-type beta chain is a regulatory subunit. The chain is V-type ATP synthase beta chain from Clostridium novyi (strain NT).